The primary structure comprises 392 residues: Bifunctional enzyme Fae/Hps (392 aa).

A formaldehyde-activating enzyme region spans residues 1 to 161; sequence MFQIGEALMG…EESNKSTHAI (161 aa). Catalysis depends on His17, which acts as the Proton donor. Residues Asp19, Leu48, Lys66, Thr68, and Gln83 each coordinate substrate. Residues 162–392 are 3-hexulose-6-phosphate synthase; the sequence is MGFKVTRLWD…IDQFRVMTDF (231 aa).

It in the N-terminal section; belongs to the formaldehyde-activating enzyme family. In the C-terminal section; belongs to the HPS/KGPDC family. HPS subfamily.

The enzyme catalyses 5,6,7,8-tetrahydromethanopterin + formaldehyde = 5,10-methylenetetrahydromethanopterin + H2O. It carries out the reaction D-ribulose 5-phosphate + formaldehyde = D-arabino-hex-3-ulose 6-phosphate. It participates in carbohydrate biosynthesis; D-ribose 5-phosphate biosynthesis. Functionally, catalyzes the condensation of formaldehyde with tetrahydromethanopterin (H(4)MPT) to 5,10-methylenetetrahydromethanopterin. Catalyzes the reversible formation of ribulose-5-phosphate and formaldehyde from 3-hexulose-6-phosphate. This Methanosarcina mazei (strain ATCC BAA-159 / DSM 3647 / Goe1 / Go1 / JCM 11833 / OCM 88) (Methanosarcina frisia) protein is Bifunctional enzyme Fae/Hps.